Here is a 366-residue protein sequence, read N- to C-terminus: Chorismate synthase (366 aa).

NADP(+) is bound by residues arginine 48 and arginine 54. FMN is bound by residues 125–127 (RSS), 238–239 (NA), glycine 278, 293–297 (KPTSS), and arginine 319.

Belongs to the chorismate synthase family. Homotetramer. The cofactor is FMNH2.

The catalysed reaction is 5-O-(1-carboxyvinyl)-3-phosphoshikimate = chorismate + phosphate. It participates in metabolic intermediate biosynthesis; chorismate biosynthesis; chorismate from D-erythrose 4-phosphate and phosphoenolpyruvate: step 7/7. In terms of biological role, catalyzes the anti-1,4-elimination of the C-3 phosphate and the C-6 proR hydrogen from 5-enolpyruvylshikimate-3-phosphate (EPSP) to yield chorismate, which is the branch point compound that serves as the starting substrate for the three terminal pathways of aromatic amino acid biosynthesis. This reaction introduces a second double bond into the aromatic ring system. The polypeptide is Chorismate synthase (Chromobacterium violaceum (strain ATCC 12472 / DSM 30191 / JCM 1249 / CCUG 213 / NBRC 12614 / NCIMB 9131 / NCTC 9757 / MK)).